We begin with the raw amino-acid sequence, 642 residues long: Threonine--tRNA ligase (642 aa).

Residues 1-61 (MPVITLPDGS…DTDSELSIIT (61 aa)) form the TGS domain. Residues 243-534 (DHRKIGKQLD…LIEEYAGKFP (292 aa)) form a catalytic region. Residues cysteine 334, histidine 385, and histidine 511 each coordinate Zn(2+).

It belongs to the class-II aminoacyl-tRNA synthetase family. In terms of assembly, homodimer. The cofactor is Zn(2+).

It is found in the cytoplasm. It carries out the reaction tRNA(Thr) + L-threonine + ATP = L-threonyl-tRNA(Thr) + AMP + diphosphate + H(+). Its function is as follows. Catalyzes the attachment of threonine to tRNA(Thr) in a two-step reaction: L-threonine is first activated by ATP to form Thr-AMP and then transferred to the acceptor end of tRNA(Thr). Also edits incorrectly charged L-seryl-tRNA(Thr). The protein is Threonine--tRNA ligase of Shewanella piezotolerans (strain WP3 / JCM 13877).